A 435-amino-acid chain; its full sequence is MDNYTDVLYQYRLAPSASPEMEMELADPRQMVRGFHLPTNESQLEIPDYGNESLDYPNYQQMVGGPCRMEDNNISYWNLTCDSPLEYAMPLYGYCMPFLLIITIISNSLIVLVLSKKSMATPTNFVLMGMAICDMLTVIFPAPGLWYMYTFGNHYKPLHPVSMCLAYSIFNEIMPAMCHTISVWLTLALAVQRYIYVCHAPMARTWCTMPRVRRCTAYIALLAFLHQLPRFFDRTYMPLVIEWNGSPTEVCHLETSMWVHDYIGVDLYYTSYYLFRVLFVHLLPCIILVTLNILLFAAMRQAQERRKLLFRENRKKECKKLRETNCTTLMLIVVVSVFLLAEIPIAVVTAMHIVSSLIIEFLDYGLANICIMLTNFFLVFSYPINFGIYCGMSRQFRETFKEIFLGRLMAKKDSSTKYSIVNGARTCTNTNETVL.

Over 1–93 (MDNYTDVLYQ…PLEYAMPLYG (93 aa)) the chain is Extracellular. Residues 94–114 (YCMPFLLIITIISNSLIVLVL) form a helical membrane-spanning segment. The Cytoplasmic portion of the chain corresponds to 115–124 (SKKSMATPTN). The chain crosses the membrane as a helical span at residues 125–145 (FVLMGMAICDMLTVIFPAPGL). At 146–168 (WYMYTFGNHYKPLHPVSMCLAYS) the chain is on the extracellular side. Residues 169 to 189 (IFNEIMPAMCHTISVWLTLAL) form a helical membrane-spanning segment. Topologically, residues 190 to 211 (AVQRYIYVCHAPMARTWCTMPR) are cytoplasmic. Residues 212–229 (VRRCTAYIALLAFLHQLP) form a helical membrane-spanning segment. Residues 230-276 (RFFDRTYMPLVIEWNGSPTEVCHLETSMWVHDYIGVDLYYTSYYLFR) are Extracellular-facing. The helical transmembrane segment at 277-297 (VLFVHLLPCIILVTLNILLFA) threads the bilayer. The Cytoplasmic portion of the chain corresponds to 298–327 (AMRQAQERRKLLFRENRKKECKKLRETNCT). The chain crosses the membrane as a helical span at residues 328 to 348 (TLMLIVVVSVFLLAEIPIAVV). Residues 349–368 (TAMHIVSSLIIEFLDYGLAN) are Extracellular-facing. The chain crosses the membrane as a helical span at residues 369–389 (ICIMLTNFFLVFSYPINFGIY). Residues 390 to 435 (CGMSRQFRETFKEIFLGRLMAKKDSSTKYSIVNGARTCTNTNETVL) are Cytoplasmic-facing.

It belongs to the G-protein coupled receptor 1 family. In the female, expressed in the reproductive organs; strongly expressed in the spermathecae and the lower oviduct. No expression in the male reproductive organs. In the central nervous system of both sexes, it is expressed in the brain and ventral nerve cord (VNC); strongly expressed in the ventral regions of the suboesophageal ganglion, the cervical connective and in many nerve roots of the brain and VNC. Expressed in the s-LNvs and l-LNvs pdf neurons (at protein level).

The protein localises to the cell membrane. Functionally, receptor for two functionally unrelated ligands; SP (A70A) for controlling reproductive behaviors and MIP for controlling sleep behavior. MIP-SPR pathway functions as a sleep homeostat which perceives the need for sleep and stabilizes it by providing a slow-acting inhibitory input to the fly arousal system that involve the pigment dispersing factor (pdf) neurons. SP-SPR is one of the multiple SP pathways that induce female post-mating behavioral responses (PMR) such as the suppression of mating receptivity and initiation of egg laying. The PMR switch is achieved by mediating the synaptic output of neurons such as those expressing fruitless (fru), double sex (dsx) and pickpocket (ppk). The sequence is that of Sex peptide receptor from Drosophila melanogaster (Fruit fly).